The following is a 405-amino-acid chain: Protein NCA1 (405 aa).

The segment at 1–85 is disordered; it reads MTTTSVCPFS…GNLNKDSTDS (85 aa). 2 stretches are compositionally biased toward basic and acidic residues: residues 13 to 24 and 37 to 48; these read ARPDDGSTRKQG and ARPDDASARKQG. Residues 76-85 show a composition bias toward polar residues; it reads GNLNKDSTDS. An RING-type zinc finger spans residues 108–142; the sequence is CMLCQALLYESSRCVPCTHVFCKVCLTRFKDCPLC. TPR repeat units follow at residues 247–280 and 292–325; these read GAVL…LMKL and SVSL…RRDA.

Interacts with the catalases CAT1, CAT2 and CAT3. This interaction is not induced by alkaline stress or H(2)O(2) and NaCl treatments. In terms of tissue distribution, expressed in roots, stems, leaves, flowers and siliques.

Its subcellular location is the cytoplasm. The protein localises to the nucleus. In terms of biological role, has holdase chaperone activity that may fold catalase to a functional structure. Not required for the peroxisome import of catalases. Required for the activity of catalases and acts mainly at the post-transcriptional level. The polypeptide is Protein NCA1 (Arabidopsis thaliana (Mouse-ear cress)).